The chain runs to 1170 residues: Probable mRNA-capping enzyme (1170 aa).

Lys-292 (N6-GMP-lysine intermediate) is an active-site residue. Residues 684-1007 form the mRNA cap 0 methyltransferase domain; the sequence is SNAAGMRAFN…LNRYYVFRKT (324 aa). 693–694 contacts mRNA; it reads NN. Residues Lys-697, Gly-715, Asp-737, and 813–815 contribute to the S-adenosyl-L-methionine site; that span reads QFT.

The protein in the N-terminal section; belongs to the dsDNA virus mRNA guanylyltransferase family. It in the C-terminal section; belongs to the class I-like SAM-binding methyltransferase superfamily. mRNA cap 0 methyltransferase family.

It localises to the virion. It carries out the reaction a 5'-end triphospho-ribonucleoside in mRNA + H2O = a 5'-end diphospho-ribonucleoside in mRNA + phosphate + H(+). The enzyme catalyses a 5'-end diphospho-ribonucleoside in mRNA + GTP + H(+) = a 5'-end (5'-triphosphoguanosine)-ribonucleoside in mRNA + diphosphate. The catalysed reaction is a 5'-end (5'-triphosphoguanosine)-ribonucleoside in mRNA + S-adenosyl-L-methionine = a 5'-end (N(7)-methyl 5'-triphosphoguanosine)-ribonucleoside in mRNA + S-adenosyl-L-homocysteine. It participates in mRNA processing; mRNA capping. Its function is as follows. Responsible for methylating the 5'-cap structure of mRNAs. This Acanthamoeba polyphaga mimivirus (APMV) protein is Probable mRNA-capping enzyme.